The primary structure comprises 255 residues: Small ribosomal subunit protein eS1 (255 aa).

Ala2 carries the post-translational modification N-acetylalanine; partial.

Belongs to the eukaryotic ribosomal protein eS1 family. Component of the small ribosomal subunit. Mature ribosomes consist of a small (40S) and a large (60S) subunit. The 40S subunit contains about 33 different proteins and 1 molecule of RNA (18S). The 60S subunit contains about 49 different proteins and 3 molecules of RNA (25S, 5.8S and 5S).

It localises to the cytoplasm. This chain is Small ribosomal subunit protein eS1 (rps1), found in Pyrenophora tritici-repentis (strain Pt-1C-BFP) (Wheat tan spot fungus).